Reading from the N-terminus, the 693-residue chain is Putative transmembrane protein ORF68 (693 aa).

Positions 1–17 are cleaved as a signal peptide; the sequence is MILTIILYTLLFSTCSA. Topologically, residues 18-666 are extracellular; the sequence is QSVHTMPEAV…WLTKFGTGGG (649 aa). Residues 208-256 adopt a coiled-coil conformation; it reads SKAANNRMDALEDGMKNINTRVTETNLLLEKLSTEVTGALTQLENEIKM. A helical membrane pass occupies residues 667–687; that stretch reads IAGVTIGLLLPILAIVFSCYV. Residues 688–693 are Cytoplasmic-facing; sequence FCKRRV.

The protein resides in the host membrane. The chain is Putative transmembrane protein ORF68 from Magallana gigas (Pacific oyster).